Reading from the N-terminus, the 501-residue chain is Aspartate--tRNA ligase, cytoplasmic (501 aa).

A Phosphothreonine modification is found at T52. K74 carries the N6-acetyllysine modification. E229 provides a ligand contact to L-aspartate. A Phosphoserine modification is found at S249. The interval Q251–K254 is aspartate. R273 contacts L-aspartate. ATP contacts are provided by residues R273–E275 and R281–L283. K374 carries the N6-acetyllysine modification. A binding site for the 3'-end of tRNA region spans residues K411 to S415. E424 serves as a coordination point for ATP. L-aspartate is bound by residues S427 and R431. G472–R475 contributes to the ATP binding site. The residue at position 500 (T500) is a Phosphothreonine; by PKA.

The protein belongs to the class-II aminoacyl-tRNA synthetase family. Type 2 subfamily. In terms of assembly, homodimer. Part of a multisubunit complex that groups tRNA ligases for Arg (RARS1), Asp (DARS1), Gln (QARS1), Ile (IARS1), Leu (LARS1), Lys (KARS1), Met (MARS1) the bifunctional ligase for Glu and Pro (EPRS1) and the auxiliary subunits AIMP1/p43, AIMP2/p38 and EEF1E1/p18.

The protein localises to the cytoplasm. The catalysed reaction is tRNA(Asp) + L-aspartate + ATP = L-aspartyl-tRNA(Asp) + AMP + diphosphate. Its function is as follows. Catalyzes the specific attachment of an amino acid to its cognate tRNA in a 2 step reaction: the amino acid (AA) is first activated by ATP to form AA-AMP and then transferred to the acceptor end of the tRNA. The polypeptide is Aspartate--tRNA ligase, cytoplasmic (DARS1) (Pongo abelii (Sumatran orangutan)).